The sequence spans 1583 residues: Transcriptional activator GLI3 (1583 aa).

Methionine 1 bears the N-acetylmethionine mark. 2 stretches are compositionally biased toward polar residues: residues 1-10 (MEAQAHSSTA) and 58-78 (ITMQ…PSTS). A disordered region spans residues 1–78 (MEAQAHSSTA…NKISEEPSTS (78 aa)). Omega-N-methylarginine is present on arginine 175. The tract at residues 368 to 475 (QSLGSAFGHS…DKDESKQEPE (108 aa)) is disordered. The segment covering 403 to 421 (VQVSSGPSESSQSKPTSES) has biased composition (low complexity). A Glycyl lysine isopeptide (Lys-Gly) (interchain with G-Cter in SUMO2) cross-link involves residue lysine 438. The segment covering 448 to 457 (SRGQQEQPEG) has biased composition (polar residues). The span at 461–474 (VKEEADKDESKQEP) shows a compositional bias: basic and acidic residues. A Glycyl lysine isopeptide (Lys-Gly) (interchain with G-Cter in SUMO2) cross-link involves residue lysine 462. 5 consecutive C2H2-type zinc fingers follow at residues 480–505 (TNCH…NNDH), 513–540 (FVCR…MRRH), 546–570 (HKCT…LRSH), 576–601 (YVCE…NRTH), and 607–632 (YVCK…KTVH). Positions 620–728 (DPSSLRKHVK…PISNYSNSGL (109 aa)) are disordered. Positions 632-648 (HGPEAHVTKKQRGDMHP) are enriched in basic and acidic residues. Serine 664 is subject to Phosphoserine. Residues 684–699 (SKREECLQVKTVKAEK) are compositionally biased toward basic and acidic residues. The span at 703–726 (SQPSPGGQSSCSSQQSPISNYSNS) shows a compositional bias: low complexity. Residues 745–845 (DETPIMDSTI…VDFTVLNTLN (101 aa)) are mediates interaction with DZIP1. Residue lysine 773 forms a Glycyl lysine isopeptide (Lys-Gly) (interchain with G-Cter in ubiquitin) linkage. A Glycyl lysine isopeptide (Lys-Gly) (interchain with G-Cter in SUMO2); alternate cross-link involves residue lysine 779. Lysine 779 participates in a covalent cross-link: Glycyl lysine isopeptide (Lys-Gly) (interchain with G-Cter in ubiquitin); alternate. Residues lysine 784 and lysine 800 each participate in a glycyl lysine isopeptide (Lys-Gly) (interchain with G-Cter in ubiquitin) cross-link. The tract at residues 809 to 828 (GNGTQSNNNYSSGGPGTLLP) is disordered. Residues 810–820 (NGTQSNNNYSS) show a composition bias toward polar residues. Phosphoserine; by PKA is present on residues serine 849, serine 865, serine 877, serine 907, serine 980, and serine 1006. A compositionally biased stretch (low complexity) spans 863–880 (RSSGISPCFSSRRSSEAS). The disordered stretch occupies residues 863 to 918 (RSSGISPCFSSRRSSEASQAEGRPQNVSVADSYDPISTDASRRSSEASQGDGLPSL). The disordered stretch occupies residues 1164-1189 (EVSSGTSDLSSSKLKCGQQRPSAQQP). The span at 1166–1175 (SSGTSDLSSS) shows a compositional bias: low complexity.

It belongs to the GLI C2H2-type zinc-finger protein family. The phosphorylated form interacts with BTRC. The full-length GLI3 form (GLI3FL) interacts with SUFU and this interaction regulates the formation of either repressor or activator forms of GLI3. Its association with SUFU is regulated by Hh signaling and dissociation of the SUFU-GLI3 interaction requires the presence of the ciliary motor KIF3A. Interacts with KIF7. The activator form of GLI3 (GLI3A) but not the repressor form (GLI3R) can interact with TRPS1. Interacts with ZIC1. Interacts with ZIC3 (via C2H2-type domains 3, 4 and 5); the interaction enhances its transcriptional activity. Interacts with WRD11; the interaction associates EMX1 with GLI3. Interacts with DZIP1; retains GLI3 within the cytoplasm. Post-translationally, phosphorylated by DYRK2 (in vitro). Phosphorylated on multiple sites by protein kinase A (PKA) and phosphorylation by PKA primes further phosphorylation by CK1 and GSK3. Phosphorylation is essential for its proteolytic processing. Transcriptional repressor GLI3R, a C-terminally truncated form, is generated from the full-length GLI3 protein (GLI3FL/GLI3-190) through proteolytic processing. This process requires PKA-primed phosphorylation of GLI3, ubiquitination of GLI3 and the presence of BTRC. GLI3FL is complexed with SUFU in the cytoplasm and is maintained in a neutral state. Without the Hh signal, the SUFU-GLI3 complex is recruited to cilia, leading to the efficient processing of GLI3FL into GLI3R. GLI3R formation leads to its dissociation from SUFU, allowing it to translocate into the nucleus, and repress Hh target genes. When Hh signaling is initiated, SUFU dissociates from GLI3FL and this has two consequences. First, GLI3R production is halted. Second, free GLI3FL translocates to the nucleus, where it is phosphorylated, destabilized, and converted to a transcriptional activator (GLI3A). Phosphorylated in vitro by ULK3.

The protein localises to the nucleus. The protein resides in the cytoplasm. It localises to the cell projection. It is found in the cilium. In terms of biological role, has a dual function as a transcriptional activator and a repressor of the sonic hedgehog (Shh) pathway, and plays a role in limb development. The full-length GLI3 form (GLI3FL) after phosphorylation and nuclear translocation, acts as an activator (GLI3A) while GLI3R, its C-terminally truncated form, acts as a repressor. A proper balance between the GLI3 activator and the repressor GLI3R, rather than the repressor gradient itself or the activator/repressor ratio gradient, specifies limb digit number and identity. In concert with TRPS1, plays a role in regulating the size of the zone of distal chondrocytes, in restricting the zone of PTHLH expression in distal cells and in activating chondrocyte proliferation. Binds to the minimal GLI-consensus sequence 5'-GGGTGGTC-3'. The chain is Transcriptional activator GLI3 (Gli3) from Mus musculus (Mouse).